Here is a 255-residue protein sequence, read N- to C-terminus: 5-oxoprolinase subunit A (255 aa).

It belongs to the LamB/PxpA family. Forms a complex composed of PxpA, PxpB and PxpC.

The enzyme catalyses 5-oxo-L-proline + ATP + 2 H2O = L-glutamate + ADP + phosphate + H(+). Functionally, catalyzes the cleavage of 5-oxoproline to form L-glutamate coupled to the hydrolysis of ATP to ADP and inorganic phosphate. The protein is 5-oxoprolinase subunit A of Clostridium kluyveri (strain ATCC 8527 / DSM 555 / NBRC 12016 / NCIMB 10680 / K1).